Here is a 547-residue protein sequence, read N- to C-terminus: Sterol carrier protein 2 (547 aa).

Residue S3 is modified to Phosphoserine. K132 carries the post-translational modification N6-acetyllysine; alternate. K132 is subject to N6-succinyllysine; alternate. An N6-succinyllysine modification is found at K168. N6-acetyllysine occurs at positions 173 and 177. N6-acetyllysine; alternate is present on K183. An N6-succinyllysine; alternate modification is found at K183. K282 bears the N6-succinyllysine mark. K341, K432, K438, K443, and K453 each carry N6-acetyllysine; alternate. K341, K432, K438, K443, and K453 each carry N6-succinyllysine; alternate. In terms of domain architecture, SCP2 spans A433–G543. K464 is modified (N6-succinyllysine). An N6-acetyllysine; alternate modification is found at K470. K470 bears the N6-succinyllysine; alternate mark. K479 bears the N6-succinyllysine mark. Position 491 is an N6-acetyllysine (K491). N6-succinyllysine occurs at positions 492 and 511. Position 516 is a phosphoserine (S516). N6-succinyllysine is present on residues K522 and K534. The Microbody targeting signal signature appears at A545–L547.

It in the N-terminal section; belongs to the thiolase-like superfamily. Thiolase family. In terms of assembly, interacts with PEX5; the interaction is essential for peroxisomal import. In terms of processing, preSCP2, a protein with a molecular mass of about 15 kDa, is processed into its mature form (SCP2) by proteolytic cleavage of a 20 residue leader sequence after translocation into peroxisomes. As to expression, liver, fibroblasts, and placenta.

The protein resides in the peroxisome. Its subcellular location is the cytoplasm. The protein localises to the mitochondrion. It localises to the endoplasmic reticulum. It catalyses the reaction choloyl-CoA + propanoyl-CoA = 3alpha,7alpha,12alpha-trihydroxy-24-oxo-5beta-cholestan-26-oyl-CoA + CoA. The enzyme catalyses 4,8,12-trimethyltridecanoyl-CoA + propanoyl-CoA = 3-oxopristanoyl-CoA + CoA. The catalysed reaction is an acyl-CoA + acetyl-CoA = a 3-oxoacyl-CoA + CoA. It carries out the reaction hexanoyl-CoA + acetyl-CoA = 3-oxooctanoyl-CoA + CoA. It catalyses the reaction tetradecanoyl-CoA + acetyl-CoA = 3-oxohexadecanoyl-CoA + CoA. The enzyme catalyses 3-oxohexadecanedioyl-CoA + CoA = tetradecanedioyl-CoA + acetyl-CoA. The catalysed reaction is propanoyl-CoA + tetradecanoyl-CoA = 3-oxo-2-methylhexadecanoyl-CoA + CoA. It carries out the reaction butanoyl-CoA + acetyl-CoA = 3-oxohexanoyl-CoA + CoA. It catalyses the reaction octanoyl-CoA + acetyl-CoA = 3-oxodecanoyl-CoA + CoA. The enzyme catalyses decanoyl-CoA + acetyl-CoA = 3-oxododecanoyl-CoA + CoA. The catalysed reaction is dodecanoyl-CoA + acetyl-CoA = 3-oxotetradecanoyl-CoA + CoA. It carries out the reaction hexadecanoyl-CoA + acetyl-CoA = 3-oxooctadecanoyl-CoA + CoA. It catalyses the reaction 3-oxo-(9Z-octadecenoyl)-CoA + CoA = (7Z)-hexadecenoyl-CoA + acetyl-CoA. The enzyme catalyses 7-dehydrocholesterol(in) = 7-dehydrocholesterol(out). Plays a crucial role in the peroxisomal oxidation of branched-chain fatty acids. Catalyzes the last step of the peroxisomal beta-oxidation of branched chain fatty acids and the side chain of the bile acid intermediates di- and trihydroxycoprostanic acids (DHCA and THCA). Also active with medium and long straight chain 3-oxoacyl-CoAs. Stimulates the microsomal conversion of 7-dehydrocholesterol to cholesterol and transfers phosphatidylcholine and 7-dehydrocholesterol between membrances, in vitro. Isoforms SCP2 and SCPx cooperate in peroxisomal oxidation of certain naturally occurring tetramethyl-branched fatty acyl-CoAs. In terms of biological role, mediates the transfer of all common phospholipids, cholesterol and gangliosides from the endoplasmic reticulum to the plasma membrane. May play a role in regulating steroidogenesis. Stimulates the microsomal conversion of 7-dehydrocholesterol to cholesterol. Also binds fatty acids and fatty acyl Coenzyme A (CoA) such as phytanoyl-CoA. Involved in the regulation phospholipid synthesis in endoplasmic reticulum enhancing the incorporation of exogenous fatty acid into glycerides. Seems to stimulate the rate-limiting step in phosphatidic acid formation mediated by GPAT3. Isoforms SCP2 and SCPx cooperate in peroxisomal oxidation of certain naturally occurring tetramethyl-branched fatty acyl-CoAs. The chain is Sterol carrier protein 2 from Homo sapiens (Human).